Here is a 612-residue protein sequence, read N- to C-terminus: UvrABC system protein C (612 aa).

The GIY-YIG domain occupies 20–98; sequence THSGVYRMLD…IKQHRPKYNI (79 aa). Residues 208 to 243 enclose the UVR domain; the sequence is SSVLEEISAKMYQASEDMEYEKAQVYRDQLVVLRKL.

It belongs to the UvrC family. In terms of assembly, interacts with UvrB in an incision complex.

It localises to the cytoplasm. Its function is as follows. The UvrABC repair system catalyzes the recognition and processing of DNA lesions. UvrC both incises the 5' and 3' sides of the lesion. The N-terminal half is responsible for the 3' incision and the C-terminal half is responsible for the 5' incision. This is UvrABC system protein C from Francisella tularensis subsp. holarctica (strain FTNF002-00 / FTA).